Here is a 312-residue protein sequence, read N- to C-terminus: Olfactory receptor 4L1 (312 aa).

At 1–25 (MDLKNGSLVTEFILLGFFGRWELQI) the chain is on the extracellular side. N5 carries an N-linked (GlcNAc...) asparagine glycan. A helical transmembrane segment spans residues 26 to 49 (FFFVTFSLIYGATVMGNILIMVTV). Over 50–57 (TCRSTLHS) the chain is Cytoplasmic. Residues 58-79 (PLYFLLGNLSFLDMCLSTATTP) traverse the membrane as a helical segment. At 80–100 (KMIIDLLTDHKTISVWGCVTQ) the chain is on the extracellular side. C97 and C189 are joined by a disulfide. Residues 101-120 (MFFMHFFGGAEMTLLIIMAF) traverse the membrane as a helical segment. Residues 121–139 (DRYVAICKPLHYRTIMSHK) are Cytoplasmic-facing. Residues 140–158 (LLKGFAILSWIIGFLHSIS) form a helical membrane-spanning segment. At 159–195 (QIVLTMNLPFCGHNVINNIFCDLPLVIKLACIETYTL) the chain is on the extracellular side. The helical transmembrane segment at 196 to 219 (ELFVIADSGLLSFTCFILLLVSYI) threads the bilayer. The Cytoplasmic segment spans residues 220–235 (VILVSVPKKSSHGLSK). The chain crosses the membrane as a helical span at residues 236–258 (ALSTLSAHIIVVTLFFGPCIFIY). Topologically, residues 259–269 (VWPFSSLASNK) are extracellular. A glycan (N-linked (GlcNAc...) asparagine) is linked at N268. The helical transmembrane segment at 270–289 (TLAVFYTVITPLLNPSIYTL) threads the bilayer. Residues 290 to 312 (RNKKMQEAIRKLRFQYVSSAQNF) are Cytoplasmic-facing.

It belongs to the G-protein coupled receptor 1 family.

The protein localises to the cell membrane. Functionally, odorant receptor. In Homo sapiens (Human), this protein is Olfactory receptor 4L1 (OR4L1).